The following is a 972-amino-acid chain: DNA topoisomerase 1 (972 aa).

Disordered regions lie at residues 1–210 (MSGD…VFVK) and 300–416 (HEQS…RQKA). Over residues 11–31 (IHIQNGGSCEVVQSNGVTTNG) the composition is skewed to polar residues. A compositionally biased stretch (basic residues) spans 32–50 (HGHHHHHHSSSSSSSKHKS). Composition is skewed to basic and acidic residues over residues 51 to 65 (SSKD…EHKS), 72 to 86 (SKEH…DRHK), and 93 to 103 (KHRDKDKERDG). Residues 104–114 (SSNSHRSGSSS) show a composition bias toward low complexity. Positions 125–138 (SKHKSSSGHHKRSS) are enriched in basic residues. Residues 139-151 (KDKERRDKDKDRG) are compositionally biased toward basic and acidic residues. The segment covering 173–183 (SHKSSSSSSSS) has biased composition (low complexity). Position 303 is a phosphoserine (Ser-303). At Tyr-304 the chain carries Phosphotyrosine. A compositionally biased stretch (acidic residues) spans 316-330 (HDDDADEMNDDEEDV). Interaction with DNA regions lie at residues 648–649 (KY), 711–716 (RAGNEK), and 807–809 (TAK). In terms of domain architecture, Topo IB-type catalytic spans 655-972 (SSKLKGEKDH…VHMADENYRF (318 aa)). Tyr-930 functions as the O-(3'-phospho-DNA)-tyrosine intermediate in the catalytic mechanism.

Belongs to the type IB topoisomerase family. Interacts with Topors.

Its subcellular location is the nucleus. It localises to the cytoplasm. The enzyme catalyses ATP-independent breakage of single-stranded DNA, followed by passage and rejoining.. Functionally, releases the supercoiling and torsional tension of DNA introduced during the DNA replication and transcription by transiently cleaving and rejoining one strand of the DNA duplex. Introduces a single-strand break via transesterification at a target site in duplex DNA. The scissile phosphodiester is attacked by the catalytic tyrosine of the enzyme, resulting in the formation of a DNA-(3'-phosphotyrosyl)-enzyme intermediate and the expulsion of a 5'-OH DNA strand. The free DNA strand then undergoes passage around the unbroken strand thus removing DNA supercoils. Finally, in the religation step, the DNA 5'-OH attacks the covalent intermediate to expel the active-site tyrosine and restore the DNA phosphodiester backbone. In Drosophila melanogaster (Fruit fly), this protein is DNA topoisomerase 1.